We begin with the raw amino-acid sequence, 607 residues long: NAD-dependent malic enzyme 2, mitochondrial (607 aa).

The transit peptide at 1 to 32 directs the protein to the mitochondrion; it reads MMWKNIAGLSKAAAAARTHGSRRCFSTAIPGP. Tyr136 serves as the catalytic Proton donor. Arg189 serves as a coordination point for NAD(+). The Proton acceptor role is filled by Lys207. Positions 278, 279, and 302 each coordinate a divalent metal cation. Residues Asp302 and Asn449 each coordinate NAD(+).

The protein belongs to the malic enzymes family. In terms of assembly, homodimer. Heterodimer of two related subunits in NAD-MEH complex. Interacts with NAD-ME1. Mg(2+) is required as a cofactor. It depends on Mn(2+) as a cofactor. As to expression, expressed in leaves, stems, flowers, and roots (at protein level). Present in pollen.

The protein resides in the mitochondrion. The catalysed reaction is (S)-malate + NAD(+) = pyruvate + CO2 + NADH. Activated by 2-ketoglutarate, phosphoenolpyruvate (PEP), fructose 1,6-biphosphate (FBP) and coenzyme A (acetyl-CoA and CoA) as homodimer and by oxaloacetate (OAA), 2-ketoglutarate, succinate, fumarate and CoA as heterodimer NAD-MEH. Repressed by succinate and fumarate as homodimer, in the presence of NAD(+) and competitively toward the substrate L-malate. Involved in the regulation of sugars and amino acids metabolisms during the night period. This Arabidopsis thaliana (Mouse-ear cress) protein is NAD-dependent malic enzyme 2, mitochondrial (NAD-ME2).